The primary structure comprises 711 residues: Arginine decarboxylase 2 (711 aa).

Residue K147 is modified to N6-(pyridoxal phosphate)lysine. I331–Y341 is a binding site for substrate. The tract at residues M642 to F661 is disordered. Residues G650–F661 are compositionally biased toward acidic residues.

Belongs to the Orn/Lys/Arg decarboxylase class-II family. SpeA subfamily. As to quaternary structure, homodimer and heterodimer with ADC1. It depends on pyridoxal 5'-phosphate as a cofactor. Mg(2+) serves as cofactor.

It localises to the plastid. Its subcellular location is the chloroplast. It is found in the cytoplasm. The protein localises to the cytosol. It catalyses the reaction L-arginine + H(+) = agmatine + CO2. The protein operates within amine and polyamine biosynthesis; agmatine biosynthesis; agmatine from L-arginine: step 1/1. In terms of biological role, required for the biosynthesis of putrescine. Catalyzes the first step of polyamine (PA) biosynthesis to produce putrescine from arginine. Is a major contributor to basal arginine decarboxylase (ADC) activity and putrescine biosynthesis. Accumulation of putrescine plays a positive role in salt stress tolerance. Accumulation of putrescine plays a positive role in freezing tolerance. Production of PA is essential for normal seed development. Controls PA homeostasis which is crucial for normal plant growth and development. The chain is Arginine decarboxylase 2 from Arabidopsis thaliana (Mouse-ear cress).